We begin with the raw amino-acid sequence, 342 residues long: Transcription initiation factor TFIID subunit 12 (342 aa).

The interval 1-221 (MKMEEFSPPT…QAPPPQMIPA (221 aa)) is disordered. Residues 12-35 (PNNHVIVQANPQIAAALSTNSPMQ) are compositionally biased toward polar residues. Composition is skewed to low complexity over residues 39 to 59 (PPQGHQNPNEQQQQQQFVGQP), 67 to 89 (PMRMQMPQQQIRQMPYPSPQMRA), 96 to 146 (QQQQ…HLMG), and 180 to 192 (QQIMQVQHQQQHQ). Over residues 193-218 (QPPPSQQIQQPPIPQPQQQQAPPPQM) the composition is skewed to pro residues. The 68-residue stretch at 230–297 (EKSKLDDLMQ…EFILKNVYNM (68 aa)) folds into the Histone-fold domain.

This sequence belongs to the TAF12 family. In terms of assembly, interacts (via histone-fold domain) with taf-4 (via the histone-fold domain). Interaction may facilitate the nuclear localization of taf-4.

The protein resides in the nucleus. Its function is as follows. Part of the general transcription factor complex TFIID. Plays a role in recruiting taf-4 to the nucleus and thereby activating transcription initiation by RNA polymerase II, as part of the TFIID complex. This chain is Transcription initiation factor TFIID subunit 12, found in Caenorhabditis elegans.